An 85-amino-acid chain; its full sequence is Large ribosomal subunit protein bL27 (85 aa).

Residues 1 to 22 (MAHKKAGGSTRNGRDSESKRLG) are disordered.

This sequence belongs to the bacterial ribosomal protein bL27 family.

The polypeptide is Large ribosomal subunit protein bL27 (Marinomonas sp. (strain MWYL1)).